The primary structure comprises 351 residues: Putative [LysW]-L-2-aminoadipate/[LysW]-L-glutamate phosphate reductase (351 aa).

Residues 9 to 12 (SGFV) and 33 to 35 (SRR) contribute to the NADP(+) site. The active site involves cysteine 150. Asparagine 318 contributes to the NADP(+) binding site.

This sequence belongs to the NAGSA dehydrogenase family. Type 1 subfamily. LysY sub-subfamily.

Its subcellular location is the cytoplasm. The enzyme catalyses [amino-group carrier protein]-C-terminal-N-(1-carboxy-5-oxopentan-1-yl)-L-glutamine + phosphate + NADP(+) = [amino-group carrier protein]-C-terminal-N-(1-carboxy-5-phosphooxy-5-oxopentan-1-yl)-L-glutamine + NADPH + H(+). The catalysed reaction is [amino-group carrier protein]-C-terminal-gamma-(L-glutamyl-5-semialdehyde)-L-glutamate + phosphate + NADP(+) = [amino-group carrier protein]-C-terminal-gamma-(5-phospho-L-glutamyl)-L-glutamate + NADPH + H(+). It functions in the pathway amino-acid biosynthesis; L-lysine biosynthesis via AAA pathway; L-lysine from L-alpha-aminoadipate (Thermus route): step 3/5. Its pathway is amino-acid biosynthesis; L-arginine biosynthesis. Involved in both the arginine and lysine biosynthetic pathways. The protein is Putative [LysW]-L-2-aminoadipate/[LysW]-L-glutamate phosphate reductase of Pyrobaculum aerophilum (strain ATCC 51768 / DSM 7523 / JCM 9630 / CIP 104966 / NBRC 100827 / IM2).